We begin with the raw amino-acid sequence, 957 residues long: Receptor-like protein 34 (957 aa).

The N-terminal stretch at 1-31 (MKGSWVVSTSIIRITLSFTFLFICHFSDVLA) is a signal peptide. At 32–910 (APTRHLCRPE…EEEDEDLISW (879 aa)) the chain is on the extracellular side. N-linked (GlcNAc...) asparagine glycans are attached at residues Asn78, Asn101, Asn114, Asn143, Asn167, Asn191, and Asn215. LRR repeat units follow at residues 120 to 143 (LHFL…SIEN), 144 to 167 (LSHL…SIGN), 168 to 192 (LSRL…IGNL), 194 to 216 (HLTF…IGNL), 217 to 240 (SHLT…IGGL), 241 to 264 (SNLT…IGNL), 266 to 287 (QLIV…SFGN), 288 to 312 (LNQL…LLNL), 313 to 336 (TGLS…ITSL), 338 to 360 (NLMA…LFII), 361 to 384 (PSLT…NISS), 386 to 409 (SNLQ…ISKL), 412 to 434 (LQEL…IFSH), 435 to 459 (LKSL…ILPY), 460 to 483 (FKTL…SVSS), 487 to 510 (SQSI…LRTQ), 511 to 534 (HELG…LWTL), and 535 to 557 (PNLF…TKPE). Residues Asn242 and Asn263 are each glycosylated (N-linked (GlcNAc...) asparagine). N-linked (GlcNAc...) asparagine glycosylation is found at Asn311 and Asn332. Residue Asn381 is glycosylated (N-linked (GlcNAc...) asparagine). Asn477 carries N-linked (GlcNAc...) asparagine glycosylation. Residues Asn541, Asn544, Asn569, Asn593, Asn608, and Asn618 are each glycosylated (N-linked (GlcNAc...) asparagine). Residues 558–580 (PSMAYLLGSNNNFTGKIPSFICE) form an LRR 19; degenerate repeat. LRR repeat units follow at residues 581–605 (LRSL…MENL), 606–630 (KSNL…IFES), 632–652 (RSLD…LRFF), 653–675 (SNLE…WLSS), 677–698 (QKLQ…QALF), 699–722 (PKLR…YFVE), 765–789 (LTIY…IGLL), 790–813 (KELH…IGNL), 815–837 (ALES…IGNL), and 839–862 (LLSY…QFLT). A glycan (N-linked (GlcNAc...) asparagine) is linked at Asn712. N-linked (GlcNAc...) asparagine glycans are attached at residues Asn796, Asn812, Asn836, and Asn844. Residues 911–931 (IAAAIGFGPGIAFGLMFGYIL) form a helical membrane-spanning segment. The Cytoplasmic portion of the chain corresponds to 932-957 (VSYKPEWFMNPFGRNNRRRKRHTTTH).

It belongs to the RLP family.

The protein resides in the cell membrane. The protein is Receptor-like protein 34 of Arabidopsis thaliana (Mouse-ear cress).